We begin with the raw amino-acid sequence, 92 residues long: Acylphosphatase (92 aa).

An intrachain disulfide couples Cys5 to Cys49. Positions 5–92 (CIIAWVYGRV…SGELTDFRIR (88 aa)) constitute an Acylphosphatase-like domain. Residues Arg20 and Asn38 contribute to the active site.

Belongs to the acylphosphatase family.

The enzyme catalyses an acyl phosphate + H2O = a carboxylate + phosphate + H(+). The chain is Acylphosphatase from Escherichia coli O157:H7.